Here is a 352-residue protein sequence, read N- to C-terminus: Beta-methylmalyl-CoA dehydratase (352 aa).

A MaoC-like domain is found at 16 to 129; the sequence is LGQTIVHATP…GKTGVVYVHS (114 aa). Residues 62–65, 85–88, and 96–98 contribute to the substrate site; these read PIDS, IANL, and GAV.

In terms of assembly, homodimer.

The catalysed reaction is (2R,3S)-beta-methylmalyl-CoA = 2-methylfumaryl-CoA + H2O. Involved in the glyoxylate assimilation cycle used to regenerate acetyl-CoA and produce pyruvate as universal precursor for biosynthesis. Catalyzes the reversible dehydration of beta-methylmalyl-CoA ((2R,3S)-beta-methylmalyl-CoA) to yield mesaconyl-CoA (2-methylfumaryl-CoA). In Chloroflexus aurantiacus (strain ATCC 29366 / DSM 635 / J-10-fl), this protein is Beta-methylmalyl-CoA dehydratase (mch).